The sequence spans 146 residues: Villin-like protein ABP41 (146 aa).

This sequence belongs to the villin/gelsolin family. In terms of assembly, binds to actin. In terms of tissue distribution, expressed in pollen (at protein level).

Its subcellular location is the cytoplasm. It localises to the cytoskeleton. In terms of biological role, ca(2+)-dependent actin filament-severing protein that is required for pollen tube growth. Probably regulates the dynamics of the actin cytoskeleton. It can promote the assembly of monomers into filaments (nucleation) as well as sever filaments already formed. This chain is Villin-like protein ABP41, found in Lilium davidii (David's lily).